The following is a 237-amino-acid chain: Ribonuclease PH (237 aa).

Residues Arg-86 and 124–126 contribute to the phosphate site; that span reads GTR.

Belongs to the RNase PH family. Homohexameric ring arranged as a trimer of dimers.

It carries out the reaction tRNA(n+1) + phosphate = tRNA(n) + a ribonucleoside 5'-diphosphate. Functionally, phosphorolytic 3'-5' exoribonuclease that plays an important role in tRNA 3'-end maturation. Removes nucleotide residues following the 3'-CCA terminus of tRNAs; can also add nucleotides to the ends of RNA molecules by using nucleoside diphosphates as substrates, but this may not be physiologically important. Probably plays a role in initiation of 16S rRNA degradation (leading to ribosome degradation) during starvation. The chain is Ribonuclease PH from Methylorubrum populi (strain ATCC BAA-705 / NCIMB 13946 / BJ001) (Methylobacterium populi).